We begin with the raw amino-acid sequence, 258 residues long: Aspartate/glutamate leucyltransferase (258 aa).

It belongs to the R-transferase family. Bpt subfamily.

Its subcellular location is the cytoplasm. The catalysed reaction is N-terminal L-glutamyl-[protein] + L-leucyl-tRNA(Leu) = N-terminal L-leucyl-L-glutamyl-[protein] + tRNA(Leu) + H(+). It carries out the reaction N-terminal L-aspartyl-[protein] + L-leucyl-tRNA(Leu) = N-terminal L-leucyl-L-aspartyl-[protein] + tRNA(Leu) + H(+). In terms of biological role, functions in the N-end rule pathway of protein degradation where it conjugates Leu from its aminoacyl-tRNA to the N-termini of proteins containing an N-terminal aspartate or glutamate. This chain is Aspartate/glutamate leucyltransferase, found in Bradyrhizobium sp. (strain ORS 278).